A 473-amino-acid chain; its full sequence is Photosystem II CP43 reaction center protein (473 aa).

A propeptide spanning residues 1-14 is cleaved from the precursor; that stretch reads MKTLYSLRRFYPVE. N-acetylthreonine is present on threonine 15. Threonine 15 bears the Phosphothreonine mark. 5 consecutive transmembrane segments (helical) span residues 69–93, 134–155, 178–200, 255–275, and 291–312; these read LFEVAHFVPEKPMYEQGLILLPHLA, LLGPETLEESFPFFGYVWKDRN, KALYFGGVYDTWAPGGGDVRKIT, KPFAWARRALVWSGEAYLSYS, and WFNNTAYPSEFYGPTGPEASQA. [CaMn4O5] cluster is bound at residue glutamate 367. Residues 447–471 traverse the membrane as a helical segment; that stretch reads RARAAAAGFEKGIDRDFEPALSMTP.

It belongs to the PsbB/PsbC family. PsbC subfamily. In terms of assembly, PSII is composed of 1 copy each of membrane proteins PsbA, PsbB, PsbC, PsbD, PsbE, PsbF, PsbH, PsbI, PsbJ, PsbK, PsbL, PsbM, PsbT, PsbX, PsbY, PsbZ, Psb30/Ycf12, at least 3 peripheral proteins of the oxygen-evolving complex and a large number of cofactors. It forms dimeric complexes. Binds multiple chlorophylls and provides some of the ligands for the Ca-4Mn-5O cluster of the oxygen-evolving complex. It may also provide a ligand for a Cl- that is required for oxygen evolution. PSII binds additional chlorophylls, carotenoids and specific lipids. is required as a cofactor.

Its subcellular location is the plastid. The protein resides in the chloroplast thylakoid membrane. One of the components of the core complex of photosystem II (PSII). It binds chlorophyll and helps catalyze the primary light-induced photochemical processes of PSII. PSII is a light-driven water:plastoquinone oxidoreductase, using light energy to abstract electrons from H(2)O, generating O(2) and a proton gradient subsequently used for ATP formation. The protein is Photosystem II CP43 reaction center protein of Oenothera argillicola (Appalachian evening primrose).